The chain runs to 458 residues: tRNA modification GTPase MnmE (458 aa).

Positions 28, 85, and 124 each coordinate (6S)-5-formyl-5,6,7,8-tetrahydrofolate. The TrmE-type G domain occupies 220-381 (GMNVVIAGRP…LKEHLKAVMG (162 aa)). N230 is a K(+) binding site. GTP contacts are provided by residues 230-235 (NAGKSS), 249-255 (TDIEGTT), and 274-277 (DTAG). S234 contacts Mg(2+). K(+)-binding residues include T249, I251, and T254. T255 provides a ligand contact to Mg(2+). K458 is a binding site for (6S)-5-formyl-5,6,7,8-tetrahydrofolate.

Belongs to the TRAFAC class TrmE-Era-EngA-EngB-Septin-like GTPase superfamily. TrmE GTPase family. In terms of assembly, homodimer. Heterotetramer of two MnmE and two MnmG subunits. It depends on K(+) as a cofactor.

Its subcellular location is the cytoplasm. In terms of biological role, exhibits a very high intrinsic GTPase hydrolysis rate. Involved in the addition of a carboxymethylaminomethyl (cmnm) group at the wobble position (U34) of certain tRNAs, forming tRNA-cmnm(5)s(2)U34. In Chromohalobacter salexigens (strain ATCC BAA-138 / DSM 3043 / CIP 106854 / NCIMB 13768 / 1H11), this protein is tRNA modification GTPase MnmE.